Here is a 429-residue protein sequence, read N- to C-terminus: Chaperone SurA (429 aa).

Residues 1-18 (MFKRIALVCALFSGVCFA) form the signal peptide. PpiC domains follow at residues 170–271 (NLTY…KLVA) and 281–380 (ITQT…EVIA).

The protein resides in the periplasm. It catalyses the reaction [protein]-peptidylproline (omega=180) = [protein]-peptidylproline (omega=0). Its function is as follows. Chaperone involved in the correct folding and assembly of outer membrane proteins. Recognizes specific patterns of aromatic residues and the orientation of their side chains, which are found more frequently in integral outer membrane proteins. May act in both early periplasmic and late outer membrane-associated steps of protein maturation. The polypeptide is Chaperone SurA (Legionella pneumophila (strain Lens)).